Reading from the N-terminus, the 79-residue chain is Darcynin (79 aa).

It belongs to the darcynin family.

In Chromobacterium violaceum (strain ATCC 12472 / DSM 30191 / JCM 1249 / CCUG 213 / NBRC 12614 / NCIMB 9131 / NCTC 9757 / MK), this protein is Darcynin.